Here is a 150-residue protein sequence, read N- to C-terminus: uncharacterized protein (150 aa).

An HTH asnC-type domain is found at 5 to 66 (LDKVDRRLLE…KPNYKKLNLG (62 aa)). Positions 24-43 (IATLSKKLGIPRTTVHYRIK) form a DNA-binding region, H-T-H motif.

This is an uncharacterized protein from Pyrococcus abyssi (strain GE5 / Orsay).